A 156-amino-acid chain; its full sequence is MAKYTISKHRLEELQLELREILDVKWPAITKQLQDAREQGDLSENADYDAAKNEQAALKKRKDEIEEILENYELIEDVMRSTDEVSIGSTIEIYNYQKDHKEVITLVGSMDSDPFANKISMDTPLGKAVVKQKEGSEVTVHTLALPYKVKIIKIID.

The stretch at 1–84 forms a coiled coil; the sequence is MAKYTISKHR…IEDVMRSTDE (84 aa).

Belongs to the GreA/GreB family.

In terms of biological role, necessary for efficient RNA polymerase transcription elongation past template-encoded arresting sites. The arresting sites in DNA have the property of trapping a certain fraction of elongating RNA polymerases that pass through, resulting in locked ternary complexes. Cleavage of the nascent transcript by cleavage factors such as GreA or GreB allows the resumption of elongation from the new 3'terminus. GreA releases sequences of 2 to 3 nucleotides. This chain is Transcription elongation factor GreA, found in Ureaplasma urealyticum serovar 10 (strain ATCC 33699 / Western).